The sequence spans 677 residues: DNA ligase (677 aa).

NAD(+) contacts are provided by residues 36–40, 85–86, and E122; these read DAEYD and SI. K124 functions as the N6-AMP-lysine intermediate in the catalytic mechanism. 4 residues coordinate NAD(+): R145, E181, K298, and K322. The Zn(2+) site is built by C416, C419, C434, and C440. The BRCT domain maps to 600 to 677; sequence LTPRPLAGKT…DEAALRALLD (78 aa).

The protein belongs to the NAD-dependent DNA ligase family. LigA subfamily. Requires Mg(2+) as cofactor. It depends on Mn(2+) as a cofactor.

It catalyses the reaction NAD(+) + (deoxyribonucleotide)n-3'-hydroxyl + 5'-phospho-(deoxyribonucleotide)m = (deoxyribonucleotide)n+m + AMP + beta-nicotinamide D-nucleotide.. DNA ligase that catalyzes the formation of phosphodiester linkages between 5'-phosphoryl and 3'-hydroxyl groups in double-stranded DNA using NAD as a coenzyme and as the energy source for the reaction. It is essential for DNA replication and repair of damaged DNA. The chain is DNA ligase from Methylibium petroleiphilum (strain ATCC BAA-1232 / LMG 22953 / PM1).